The sequence spans 156 residues: Small ribosomal subunit protein uS7 (156 aa).

Belongs to the universal ribosomal protein uS7 family. In terms of assembly, part of the 30S ribosomal subunit. Contacts proteins S9 and S11.

Its function is as follows. One of the primary rRNA binding proteins, it binds directly to 16S rRNA where it nucleates assembly of the head domain of the 30S subunit. Is located at the subunit interface close to the decoding center, probably blocks exit of the E-site tRNA. In Deinococcus deserti (strain DSM 17065 / CIP 109153 / LMG 22923 / VCD115), this protein is Small ribosomal subunit protein uS7.